Reading from the N-terminus, the 607-residue chain is Elongation factor 4 (607 aa).

The 183-residue stretch at 6-188 (SRIRNFSIIA…AIVARIPPPR (183 aa)) folds into the tr-type G domain. Residues 18–23 (DHGKST) and 135–138 (NKID) contribute to the GTP site.

The protein belongs to the TRAFAC class translation factor GTPase superfamily. Classic translation factor GTPase family. LepA subfamily.

It localises to the cell inner membrane. It carries out the reaction GTP + H2O = GDP + phosphate + H(+). Its function is as follows. Required for accurate and efficient protein synthesis under certain stress conditions. May act as a fidelity factor of the translation reaction, by catalyzing a one-codon backward translocation of tRNAs on improperly translocated ribosomes. Back-translocation proceeds from a post-translocation (POST) complex to a pre-translocation (PRE) complex, thus giving elongation factor G a second chance to translocate the tRNAs correctly. Binds to ribosomes in a GTP-dependent manner. The chain is Elongation factor 4 from Sphingopyxis alaskensis (strain DSM 13593 / LMG 18877 / RB2256) (Sphingomonas alaskensis).